Reading from the N-terminus, the 357-residue chain is Probable nitronate monooxygenase (357 aa).

FMN is bound by residues Asn71, Gln175, Gly180, Gly219, and 238–241; that span reads QMGT.

The protein belongs to the nitronate monooxygenase family. NMO class I subfamily. It depends on FMN as a cofactor.

The catalysed reaction is 3 propionate 3-nitronate + 3 O2 + H2O = 3 3-oxopropanoate + 2 nitrate + nitrite + H2O2 + 3 H(+). In terms of biological role, nitronate monooxygenase that uses molecular oxygen to catalyze the oxidative denitrification of alkyl nitronates. Acts on propionate 3-nitronate (P3N), the presumed physiological substrate. Probably functions in the detoxification of P3N, a metabolic poison produced by plants and fungi as a defense mechanism. The chain is Probable nitronate monooxygenase from Staphylococcus haemolyticus (strain JCSC1435).